Consider the following 640-residue polypeptide: Threonine--tRNA ligase (640 aa).

Positions 1 to 61 constitute a TGS domain; it reads MPTITLPDGS…ENDASLQIIT (61 aa). The segment at 242–533 is catalytic; the sequence is DHRKIGKRLG…LIEHYEGAFP (292 aa). Zn(2+) contacts are provided by Cys333, His384, and His510.

This sequence belongs to the class-II aminoacyl-tRNA synthetase family. As to quaternary structure, homodimer. Zn(2+) serves as cofactor.

It is found in the cytoplasm. It catalyses the reaction tRNA(Thr) + L-threonine + ATP = L-threonyl-tRNA(Thr) + AMP + diphosphate + H(+). Functionally, catalyzes the attachment of threonine to tRNA(Thr) in a two-step reaction: L-threonine is first activated by ATP to form Thr-AMP and then transferred to the acceptor end of tRNA(Thr). Also edits incorrectly charged L-seryl-tRNA(Thr). This Pseudomonas savastanoi pv. phaseolicola (strain 1448A / Race 6) (Pseudomonas syringae pv. phaseolicola (strain 1448A / Race 6)) protein is Threonine--tRNA ligase.